Reading from the N-terminus, the 477-residue chain is Histidine--tRNA ligase (477 aa).

The protein belongs to the class-II aminoacyl-tRNA synthetase family. Homodimer.

The protein localises to the cytoplasm. The enzyme catalyses tRNA(His) + L-histidine + ATP = L-histidyl-tRNA(His) + AMP + diphosphate + H(+). This is Histidine--tRNA ligase (hisS) from Xanthomonas campestris pv. campestris (strain ATCC 33913 / DSM 3586 / NCPPB 528 / LMG 568 / P 25).